Consider the following 520-residue polypeptide: Apolipoprotein N-acyltransferase (520 aa).

7 consecutive transmembrane segments (helical) span residues 12-32, 33-53, 58-78, 93-113, 122-142, 168-188, and 193-213; these read IFTY…FSPF, DYWG…KTAE, LWSA…WVHV, VLVL…AYLI, AMFP…FTGF, VTFF…VLLI, and WNVV…SAYS. A CN hydrolase domain is found at 232–479; that stretch reads AQGNIEQNLK…ETTLTHKVAA (248 aa). Glutamate 272 serves as the catalytic Proton acceptor. Residue lysine 338 is part of the active site. Cysteine 390 functions as the Nucleophile in the catalytic mechanism. Residues 484-504 form a helical membrane-spanning segment; the sequence is TPYAVFGNTAIYGLSLLLLLM.

This sequence belongs to the CN hydrolase family. Apolipoprotein N-acyltransferase subfamily.

It is found in the cell inner membrane. The enzyme catalyses N-terminal S-1,2-diacyl-sn-glyceryl-L-cysteinyl-[lipoprotein] + a glycerophospholipid = N-acyl-S-1,2-diacyl-sn-glyceryl-L-cysteinyl-[lipoprotein] + a 2-acyl-sn-glycero-3-phospholipid + H(+). It functions in the pathway protein modification; lipoprotein biosynthesis (N-acyl transfer). Functionally, catalyzes the phospholipid dependent N-acylation of the N-terminal cysteine of apolipoprotein, the last step in lipoprotein maturation. This Pasteurella multocida (strain Pm70) protein is Apolipoprotein N-acyltransferase.